Here is a 131-residue protein sequence, read N- to C-terminus: Interleukin-13 (131 aa).

The signal sequence occupies residues 1–18; sequence MALWLTLVIALTCFGGLA. Asn39, Asn50, Asn58, and Asn74 each carry an N-linked (GlcNAc...) asparagine glycan. Intrachain disulfides connect Cys49/Cys78 and Cys66/Cys92.

It belongs to the IL-4/IL-13 family. Interacts with IL13RA2.

The protein localises to the secreted. In terms of biological role, cytokine that plays important roles in allergic inflammation and immune response to parasite infection. Synergizes with IL2 in regulating interferon-gamma synthesis. Stimulates B-cell proliferation, and activation of eosinophils, basophils, and mast cells. Plays an important role in controlling IL33 activity by modulating the production of transmembrane and soluble forms of interleukin-1 receptor-like 1/IL1RL1. Displays the capacity to antagonize Th1-driven proinflammatory immune response and downregulates synthesis of many proinflammatory cytokines including IL1, IL6, IL10, IL12 and TNF-alpha through a mechanism that partially involves suppression of NF-kappa-B. Also functions on nonhematopoietic cells, including endothelial cells where it induces vascular cell adhesion protein 1/VCAM1, which is important in the recruitment of eosinophils. Exerts its biological effects through its receptors which comprises the IL4R chain and the IL13RA1 chain, to activate JAK1 and TYK2, leading to the activation of STAT6. Aside from IL13RA1, another receptor IL13RA2 acts as a high affinity decoy for IL13 and mediates internalization and depletion of extracellular IL13. In Sus scrofa (Pig), this protein is Interleukin-13 (IL13).